The chain runs to 524 residues: Translation initiation factor eIF2B subunit delta (524 aa).

A disordered region spans residues 1–173 (MATAAVAVRE…ERQQVPTRKD (173 aa)). At A2 the chain carries N-acetylalanine. Position 12 is a phosphoserine (S12). Basic and acidic residues predominate over residues 26–40 (AEGREMTQEEKLQLR). Residues 41 to 51 (KEKKQQKKKRK) show a composition bias toward basic residues. The residue at position 86 (T86) is a Phosphothreonine. Composition is skewed to basic and acidic residues over residues 87-121 (AKEKVPAGRSKAELRAERRAKQEAERAMKQARKGD) and 161-173 (KKPERQQVPTRKD). The may bind the chemical integrated stress response (ISR) inhibitor ISRIB stretch occupies residues 171–180 (RKDYGSKVSL).

This sequence belongs to the eIF-2B alpha/beta/delta subunits family. Component of the translation initiation factor 2B (eIF2B) complex which is a heterodecamer of two sets of five different subunits: alpha, beta, gamma, delta and epsilon. Subunits alpha, beta and delta comprise a regulatory subcomplex and subunits epsilon and gamma comprise a catalytic subcomplex. Within the complex, the hexameric regulatory complex resides at the center, with the two heterodimeric catalytic subcomplexes bound on opposite sides.

The protein resides in the cytoplasm. The protein localises to the cytosol. With respect to regulation, activated by the chemical integrated stress response (ISR) inhibitor ISRIB which stimulates guanine nucleotide exchange factor activity for both phosphorylated and unphosphorylated eIF2. Functionally, acts as a component of the translation initiation factor 2B (eIF2B) complex, which catalyzes the exchange of GDP for GTP on eukaryotic initiation factor 2 (eIF2) gamma subunit. Its guanine nucleotide exchange factor activity is repressed when bound to eIF2 complex phosphorylated on the alpha subunit, thereby limiting the amount of methionyl-initiator methionine tRNA available to the ribosome and consequently global translation is repressed. The protein is Translation initiation factor eIF2B subunit delta (EIF2B4) of Bos taurus (Bovine).